Consider the following 317-residue polypeptide: E3 ubiquitin-protein ligase NRDP1 (317 aa).

The segment at 18-57 adopts an RING-type; degenerate zinc-finger fold; sequence CPICSGVLEEPVQAPHCEHAFCNACITQWFSQQQTCPVDR. The SIAH-type; degenerate zinc finger occupies 78–138; the sequence is KLQIACDNAV…LPNHNCIKHL (61 aa).

Interacts with USP8, ERBB3, PRKN and BIRC6. Interacts with CSF2RB, EPOR, IL3RA, MYD88 and TBK1. Interacts with CLEC16A. Post-translationally, autoubiquitinated. Autoubiquitination leads to proteasomal degradation. Deubiquitinated by USP8 to get stabilized which induces apoptosis. As to expression, detected in ovary, testis and prostate.

The enzyme catalyses S-ubiquitinyl-[E2 ubiquitin-conjugating enzyme]-L-cysteine + [acceptor protein]-L-lysine = [E2 ubiquitin-conjugating enzyme]-L-cysteine + N(6)-ubiquitinyl-[acceptor protein]-L-lysine.. It functions in the pathway protein modification; protein ubiquitination. Acts as E3 ubiquitin-protein ligase and regulates the degradation of target proteins. Polyubiquitinates MYD88. Negatively regulates MYD88-dependent production of pro-inflammatory cytokines. Can promote TRIF-dependent production of type I interferon and inhibits infection with vesicular stomatitis virus. Promotes also activation of TBK1 and IRF3. Involved in the ubiquitination of erythropoietin (EPO) and interleukin-3 (IL-3) receptors. Thus, through maintaining basal levels of cytokine receptors, RNF41 is involved in the control of hematopoietic progenitor cell differentiation into myeloerythroid lineages. Contributes to the maintenance of steady-state ERBB3 levels by mediating its growth factor-independent degradation. Involved in the degradation of the inhibitor of apoptosis BIRC6 and thus is an important regulator of cell death by promoting apoptosis. Also acts as a PRKN modifier that accelerates its degradation, resulting in a reduction of PRKN activity, influencing the balance of intracellular redox state. The RNF41-PRKN pathway regulates autophagosome-lysosome fusion during late mitophagy. Mitophagy is a selective form of autophagy necessary for mitochondrial quality control. The chain is E3 ubiquitin-protein ligase NRDP1 (RNF41) from Homo sapiens (Human).